The sequence spans 226 residues: Tyramine N-feruloyltransferase 4/11 (226 aa).

Residues 29-45 (HIYKLFYQIHEYHNYTH) are important in binding site and for catalytic activity. An N-acetyltransferase domain is found at 72–222 (VLLLEVSPTP…VGDALQKYAD (151 aa)).

The protein belongs to the acetyltransferase family. As to quaternary structure, homodimer.

The protein resides in the cytoplasm. The catalysed reaction is tyramine + (E)-feruloyl-CoA = N-[(E)-feruloyl]tyramine + CoA + H(+). With respect to regulation, inhibited by (2-hydroxyphenyl)amino sulfinyl acetic acid 1,1-dimethylethyl ester, by DEPC and by N-ethylmaleimide. Synthesizes amides which are involved in stress response in the cell wall. Catalyzes the synthesis of hydroxycinnamic acid amides from hydroxycinnamoyl-CoA thioesters and various hydroxyphenylethylamines such as 4-coumaroyl-CoA and sinapoyl-CoA. In Nicotiana tabacum (Common tobacco), this protein is Tyramine N-feruloyltransferase 4/11 (THT4).